We begin with the raw amino-acid sequence, 75 residues long: UPF0352 protein VV1166 (75 aa).

This sequence belongs to the UPF0352 family.

The sequence is that of UPF0352 protein VV1166 from Vibrio vulnificus (strain YJ016).